The primary structure comprises 147 residues: Hemoglobin subunit beta-H1 (147 aa).

The 145-residue stretch at 3 to 147 (HFTAEEKAAI…VANALSHKYH (145 aa)) folds into the Globin domain. The heme b site is built by H64 and H93.

It belongs to the globin family. Heterotetramer of two alpha chains and two beta chains. As to expression, red blood cells.

Its function is as follows. This is an embryonic beta-type chain. The chain is Hemoglobin subunit beta-H1 (Hbb-bh1) from Mus musculus (Mouse).